We begin with the raw amino-acid sequence, 806 residues long: Volume-regulated anion channel subunit LRRC8E (806 aa).

The Cytoplasmic portion of the chain corresponds to 1 to 22 (MIPVAEFKQFTEQQPAFKVLKP). Residues 23-43 (WWDVLAEYITYAMLMIGVFGC) traverse the membrane as a helical segment. Over 44–130 (TLQVTQDKII…YETALHWYAK (87 aa)) the chain is Extracellular. A disulfide bridge connects residues Cys54 and Cys311. 2 N-linked (GlcNAc...) asparagine glycosylation sites follow: Asn57 and Asn80. The span at 72–81 (YDQQSPPSND) shows a compositional bias: polar residues. The tract at residues 72 to 103 (YDQQSPPSNDSDLETTIPPPTATSSPPREMSG) is disordered. The chain crosses the membrane as a helical span at residues 131-151 (YFPYLVVIHTLIFIICGNFWF). Residues 152–275 (KFPGTSSKIE…MRQTVLKVCK (124 aa)) lie on the Cytoplasmic side of the membrane. The interval 182-213 (EVSGESSQEKPSQERSIDRELSKPNFEEGSPA) is disordered. A compositionally biased stretch (basic and acidic residues) spans 188–207 (SQEKPSQERSIDRELSKPNF). A helical membrane pass occupies residues 276–296 (FVLITIYNAVLVGKIHFIVPC). Residues 297–323 (SVHTEDMTGYNSFCCNHTKAHLFSKLA) are Extracellular-facing. Asn312 is a glycosylation site (N-linked (GlcNAc...) asparagine). Residues 324–344 (ITYLCFLGVYGLTCLYTLYWL) traverse the membrane as a helical segment. Residues 345–806 (FRRPLKEYSF…VEVRDKLKED (462 aa)) are Cytoplasmic-facing. LRR repeat units follow at residues 544–566 (LKSLKVLTIKSNLSKIPATVADV), 569–589 (HLQKFSIHNDGTKLLTLNALK), 593–614 (LVKELELVRCELERIPHAVFSL), 616–637 (NLQVLDLKENTLHTIEEIISLQ), 641–662 (KLSVLRLWHNQIAYIPEHIRKL), 664–685 (GLEELSLNRNKILVIPSQLFLC), 687–708 (KLRHLDLSNNEIRELPPEIGVL), 710–731 (LLQYLGLSGNFLEDLPNELFFC), 733–754 (KLKTLKLGQNRLGNLSPKVGSL), and 756–777 (CLVKLELKGNRMDTLPPELGNC).

It belongs to the LRRC8 family. Heterohexamer; oligomerizes with other LRRC8 proteins (lrrc8a, lrrc8c, lrrc8d and/or lrrc8b) to form a heterohexamer. Detected in a channel complex that contains lrrc8a, lrrc8c and lrrc8e. In vivo, the subunit composition may depend primarily on expression levels, and heterooligomeric channels containing various proportions of the different LRRC8 proteins may coexist.

It localises to the cell membrane. The protein resides in the endoplasmic reticulum membrane. Its subcellular location is the lysosome membrane. It catalyses the reaction chloride(in) = chloride(out). The catalysed reaction is iodide(out) = iodide(in). It carries out the reaction taurine(out) = taurine(in). The enzyme catalyses 2',3'-cGAMP(out) = 2',3'-cGAMP(in). Functionally, non-essential component of the volume-regulated anion channel (VRAC, also named VSOAC channel), an anion channel required to maintain a constant cell volume in response to extracellular or intracellular osmotic changes. The VRAC channel conducts iodide better than chloride and can also conduct organic osmolytes like taurine. Mediates efflux of amino acids, such as aspartate, in response to osmotic stress. The VRAC channel also mediates transport of immunoreactive cyclic dinucleotide GMP-AMP (2'-3'-cGAMP), an immune messenger produced in response to DNA virus in the cytosol. Channel activity requires lrrc8a plus at least one other family member (lrrc8b, lrrc8c, lrrc8d or lrrc8e); channel characteristics depend on the precise subunit composition. Also plays a role in lysosome homeostasis by forming functional lysosomal VRAC channels in response to low cytoplasmic ionic strength condition: lysosomal VRAC channels are necessary for the formation of large lysosome-derived vacuoles, which store and then expel excess water to maintain cytosolic water homeostasis. This Xenopus tropicalis (Western clawed frog) protein is Volume-regulated anion channel subunit LRRC8E.